A 160-amino-acid chain; its full sequence is Protein P5 (160 aa).

A helical transmembrane segment spans residues 7 to 23; that stretch reads FLATAAALGVAMFPTQI.

The protein resides in the virion membrane. In Pseudoalteromonas espejiana (Bacteriophage PM2), this protein is Protein P5 (V).